We begin with the raw amino-acid sequence, 355 residues long: Putative beta-lactamase HcpE (355 aa).

The first 22 residues, 1–22, serve as a signal peptide directing secretion; sequence MNIKILKILVGGLFFLSLNAHL. TPR repeat units follow at residues 27–60, 63–96, 98–131, 132–166, 202–240, 245–275, 276–311, and 312–344; these read DNSFLGIGERAYKSGNYSKAASYFKKACNDGVSE, TQLGIIYENGQGTRIDYKKALEYYKTACQADDRE, CFGLGGLYDEGLGTAQNYQEAIDAYAKACVLKHP, ESCYNLGIIYDRKIKGNAAQAVTYYQKSCNFDMAK, GQACRALGSLFENGDAGLDEDFEVAFDYLQKACALNNSG, LGSMYMLGRYVKKDPQKAFNYFKQACDMGSA, VSCSRMGFMYSQGDTVSKDLRKALDNYERGCDMGDE, and VGCFALAGMYYNMKDKENAIMIYDKGCKLGMKQ. 9 disulfide bridges follow: Cys-54–Cys-62, Cys-90–Cys-98, Cys-126–Cys-134, Cys-160–Cys-168, Cys-197–Cys-205, Cys-234–Cys-242, Cys-270–Cys-278, Cys-306–Cys-314, and Cys-338–Cys-346.

It belongs to the hcp beta-lactamase family.

Its subcellular location is the secreted. It carries out the reaction a beta-lactam + H2O = a substituted beta-amino acid. In terms of biological role, may hydrolyze 6-aminopenicillinic acid and 7-aminocephalosporanic acid (ACA) derivatives. This Helicobacter pylori (strain J99 / ATCC 700824) (Campylobacter pylori J99) protein is Putative beta-lactamase HcpE (hcpE).